A 176-amino-acid polypeptide reads, in one-letter code: Ferredoxin-type protein NapF (176 aa).

2 4Fe-4S ferredoxin-type domains span residues 39-68 (VENSIFVARCTRCGDCLSVCETNILVKGDA) and 71-100 (PEVRFDNGECTFCGKCVDACKQPIFYPRDQ). 16 residues coordinate [4Fe-4S] cluster: Cys-48, Cys-51, Cys-54, Cys-58, Cys-80, Cys-83, Cys-86, Cys-90, Cys-113, Cys-121, Cys-124, Cys-128, Cys-152, Cys-155, Cys-158, and Cys-162. 4Fe-4S ferredoxin-type domains are found at residues 119-138 (IECRTCQDNCPANAIRFKLQ) and 143-172 (AQPLVNFDACNGCGACVQGCPVNAITMNDL).

Belongs to the NapF family. In terms of assembly, interacts with the cytoplasmic NapA precursor. [4Fe-4S] cluster is required as a cofactor.

It is found in the cytoplasm. Functionally, could be involved in the maturation of NapA, the catalytic subunit of the periplasmic nitrate reductase, before its export into the periplasm. The chain is Ferredoxin-type protein NapF from Haemophilus influenzae (strain ATCC 51907 / DSM 11121 / KW20 / Rd).